The following is a 385-amino-acid chain: 6-hydroxynicotinate 3-monooxygenase (385 aa).

An N-terminal signal peptide occupies residues 1–20; it reads MSQSPRIAVVGAGLGGAAAA. FAD contacts are provided by residues G15, 34–35, H47, R108, and L130; that span reads EQ. The Proton acceptor role is filled by H47. Y215 functions as the Proton acceptor in the catalytic mechanism. Residues D294 and 307-308 contribute to the FAD site; that span reads AA.

It belongs to the 6-hydroxynicotinate 3-monooxygenase family. Monomer. FAD serves as cofactor.

The catalysed reaction is 6-hydroxynicotinate + NADH + O2 + 2 H(+) = 2,5-dihydroxypyridine + CO2 + NAD(+) + H2O. Its activity is regulated as follows. Inhibited competitively by nicotinic acid with a Ki of 0.49 mM. Inhibited by thiol-specific compounds p-chloromercuribenzoate, DTNB, Ag(2)SO(4), HgCl(2), CuCl(2) and N-ethylmaleimide. No inhibition by o-phenanthroline, 8-hydroxyquinoline, EDTA, disodium 4,5-dihydroxy-m-benzenedisulfonate, fluoride, azide, KCl, LiCl, NaCl, BaCl(2), MnCl(2), MgCl(2), PBCl, ZnCl(2), CoCl(2), SnCl(2), FeSO(4), FeCl(3), NiCl(2), CdCl(2), AlCl(3), iodoacetic acid, hydro-xylamine, phenylhydrazine, semicarbazide, cysteamine, alpha,alpha-dipyridyl and urea. Its function is as follows. Flavin-dependent monooxygenase (FMO) that catalyzes the decarboxylative hydroxylation of 6-hydroxynicotinic acid (6-HNA) to 2,5-dihydroxypyridine (2,5-DHP) with concomitant oxidation of NADH, a step in the aerobic nicotinate degradation pathway. Uses NADH in preference to NADPH as an electron donor. The polypeptide is 6-hydroxynicotinate 3-monooxygenase (nicC) (Pseudomonas fluorescens).